We begin with the raw amino-acid sequence, 119 residues long: Ribonuclease P protein component (119 aa).

Belongs to the RnpA family. Consists of a catalytic RNA component (M1 or rnpB) and a protein subunit.

It catalyses the reaction Endonucleolytic cleavage of RNA, removing 5'-extranucleotides from tRNA precursor.. RNaseP catalyzes the removal of the 5'-leader sequence from pre-tRNA to produce the mature 5'-terminus. It can also cleave other RNA substrates such as 4.5S RNA. The protein component plays an auxiliary but essential role in vivo by binding to the 5'-leader sequence and broadening the substrate specificity of the ribozyme. This is Ribonuclease P protein component from Mycobacterium avium (strain 104).